The following is a 262-amino-acid chain: tRNA pseudouridine synthase A (262 aa).

D54 (nucleophile) is an active-site residue. Residue Y113 participates in substrate binding.

The protein belongs to the tRNA pseudouridine synthase TruA family. Homodimer.

The enzyme catalyses uridine(38/39/40) in tRNA = pseudouridine(38/39/40) in tRNA. In terms of biological role, formation of pseudouridine at positions 38, 39 and 40 in the anticodon stem and loop of transfer RNAs. The chain is tRNA pseudouridine synthase A from Lactobacillus delbrueckii subsp. bulgaricus (strain ATCC BAA-365 / Lb-18).